The sequence spans 394 residues: Phenylalanine 4-monooxygenase, chloroplastic (394 aa).

A chloroplast-targeting transit peptide spans 1 to 79 (MAMEVGYLRH…LNQIQAVSTA (79 aa)). Positions 75–97 (AVSTAEKEREADKTSTPPIPSSI) are disordered. The Fe cation site is built by His-252, His-257, and Glu-297.

The protein belongs to the biopterin-dependent aromatic amino acid hydroxylase family. In terms of assembly, forms monomers. The cofactor is Fe(2+).

The protein localises to the plastid. It localises to the chloroplast. The catalysed reaction is (6R)-L-erythro-5,6,7,8-tetrahydrobiopterin + L-phenylalanine + O2 = (4aS,6R)-4a-hydroxy-L-erythro-5,6,7,8-tetrahydrobiopterin + L-tyrosine. In terms of biological role, catalyzes the hydroxylation of L-phenylalanine to L-tyrosine. Does not seem to be tetrahydropterin-dependent and shows preference for 10-formyltetrahydrofolate as cosubstrate and electron donor. The protein is Phenylalanine 4-monooxygenase, chloroplastic of Physcomitrium patens (Spreading-leaved earth moss).